The chain runs to 287 residues: Protease HtpX (287 aa).

The next 2 helical transmembrane spans lie at 4-24 (IFLL…VMSI) and 33-53 (GGLL…SLAI). His139 contributes to the Zn(2+) binding site. Residue Glu140 is part of the active site. His143 provides a ligand contact to Zn(2+). Helical transmembrane passes span 154 to 174 (LIQG…AGII) and 195 to 215 (AVVF…VAYF). Glu220 is a Zn(2+) binding site.

It belongs to the peptidase M48B family. It depends on Zn(2+) as a cofactor.

Its subcellular location is the cell inner membrane. The protein is Protease HtpX of Shewanella frigidimarina (strain NCIMB 400).